We begin with the raw amino-acid sequence, 632 residues long: MDQSKMRRTNQFRKTSQKPPSTGIDSYPTPAQSPMAQHETPMWDFNSLNPYFSMLNMNDGINYARHQQNHIVTSRPPTPLTDLMSLRSFQSFPNVFMPVSRSRTSSFIQSDTDSSRLESDDFSQNVRCFSADIDRSKSYGSSKHYHLKYSRPALSRNSRSFTRSNNVLPTWSLDSNGEMRSRLSLSEVLDSGDLMKFAVDKTGCQFLEKAVKGSLTSYQKFQLFEQVIGRKDDFLKLSTNIFGNYLVQSVIGISLATNDDGYTKRQEKLKNFISSQMTDMCLDKFACRVIQSSLQNMDLSLACKLVQALPRDARLIAICVDQNANHVIQKVVAVIPLKNWEFIVDFVATPEHLRQICSDKYGCRVVQTIIEKLTADSMNVDLTSAAQNLRERALQRLMTSVTNRCQELATNEYANYIIQHIVSNDDLAVYRECIIEKCLMRNLLSLSQEKFASHVVEKAFLHAPLELLAEMMDEIFDGYIPHPDTGKDALDIMMFHQFGNYVVQCMLTICCDAVSGRRQTKEGGYDHAISFQDWLKKLHSRVTKERHRLSRFSSGKKMIETLANLRSTHPIYELQSSGHDSFKTDYFSTASEHDGPELEKNGIEEGSLMLEPRSNKSSVSVKFSSSGSHGDD.

Over residues 1 to 11 the composition is skewed to basic residues; the sequence is MDQSKMRRTNQ. The interval 1-37 is disordered; it reads MDQSKMRRTNQFRKTSQKPPSTGIDSYPTPAQSPMAQ. Residues 12-35 are compositionally biased toward polar residues; it reads FRKTSQKPPSTGIDSYPTPAQSPM. The 405-residue stretch at 162–566 folds into the PUM-HD domain; sequence TRSNNVLPTW…KMIETLANLR (405 aa). Pumilio repeat units lie at residues 187–225, 226–264, 271–307, 308–332, 345–384, 400–436, 438–473, and 484–521; these read EVLD…QLFE, QVIG…GYTK, NFIS…KLVQ, ALPR…QKVV, DFVA…DLTS, SVTN…CIIE, CLMR…EMMD, and DTGK…RQTK. The segment at 609-632 is disordered; that stretch reads MLEPRSNKSSVSVKFSSSGSHGDD. The span at 615 to 632 shows a compositional bias: low complexity; it reads NKSSVSVKFSSSGSHGDD.

As to quaternary structure, interacts (via C-terminus) with gld-3 isoform A in an RNA-independent manner. Interacts with dlc-1, and is required for the localization of fbf-2 to P granules. Interacts (via RNA-binding domain) with lst-1, probably displaces bound auto-inhibitory C-terminal tail and alters its RNA-binding affinity. In terms of tissue distribution, expressed specifically in the germline (at protein level).

Its subcellular location is the cytoplasm. The protein localises to the cytoplasmic granule. Its function is as follows. RNA-binding protein that binds to the consensus sequence 5'-UGUGCCAUA-3' in mRNA 3'-UTRs. Involved in the control of stem cells and sex determination in the C.elegans hermaphrodite germline. May also play a role in the hermaphrodite germline proliferation and oogenesis. By binding to the 3'-UTR, represses phosphatase lip-1 expression in the distal part of the germline mitotic zone. Binds specifically to the regulatory region of fem-3 3'-UTR and mediates the sperm/oocyte switch. Negatively regulates gld-3 expression possibly by directly binding to two sites within the gld-3 isoform b 3'-UTR. Suppresses germline tumor formation by preventing the dedifferentiation of secondary spermatocytes. C-terminal disordered region probably auto-inhibits RNA binding; auto-inhibition may be reversed by interaction with lst-1. The polypeptide is Fem-3 mRNA-binding factor 2 (Caenorhabditis elegans).